Consider the following 510-residue polypeptide: Maturase K (510 aa).

It belongs to the intron maturase 2 family. MatK subfamily.

It localises to the plastid. The protein resides in the chloroplast. Its function is as follows. Usually encoded in the trnK tRNA gene intron. Probably assists in splicing its own and other chloroplast group II introns. The sequence is that of Maturase K from Taxus cuspidata (Japanese yew).